Here is a 1371-residue protein sequence, read N- to C-terminus: F-actin-uncapping protein LRRC16A (1371 aa).

Methionine 1 is subject to N-acetylmethionine. Phosphoserine is present on serine 122. 10 LRR repeats span residues 245–269, 275–298, 304–327, 336–363, 391–418, 423–447, 481–506, 543–566, 570–593, and 654–678; these read SNRL…LASA, NSGL…SLSI, PKGL…SLSQ, ASTL…FLAQ, LQYL…SFKQ, SLAL…LLLG, IHNI…VWLS, ESPL…IINA, NTSL…MLAK, and LQKI…AYRL. Residues 710-734 are a coiled coil; the sequence is GDAIQEDLKSAERLMRDAKNSKTLL. Position 916 is a phosphothreonine (threonine 916). Disordered regions lie at residues 957–1000, 1036–1159, and 1172–1371; these read PFPS…QPTQ, KMDS…RRYG, and KAKQ…FIFV. One copy of the LRR 11 repeat lies at 958-981; the sequence is FPSLRQEKRSSGFISELPSEEGKK. The inhibits capping activity of CAPZA2 stretch occupies residues 958–1082; sequence FPSLRQEKRS…LIKSRSKSER (125 aa). Serine 968 bears the Phosphoserine mark. Composition is skewed to basic and acidic residues over residues 977–986 and 1036–1061; these read EEGKKLEHFT and KMDS…EKKK. The segment at 1055–1089 is necessary for localization at the cell membrane; it reads GGDEKKKRDSRKSSGFLNLIKSRSKSERPPTILMT. 2 positions are modified to phosphoserine: serine 1067 and serine 1094. 2 stretches are compositionally biased toward basic and acidic residues: residues 1106–1130 and 1139–1148; these read CPRK…KTPD and EIGKVERSDS. Positions 1190–1199 are enriched in polar residues; the sequence is AVSQDSSSPA. A Phosphothreonine modification is found at threonine 1228. Residues 1231 to 1243 are compositionally biased toward basic and acidic residues; sequence KNTKAEPKAEAGS. Over residues 1244 to 1265 the composition is skewed to low complexity; sequence RSRSSSSTPTSPKPLLQSPKPS. Serine 1280, serine 1288, serine 1291, serine 1315, serine 1324, and serine 1331 each carry phosphoserine. The segment covering 1313–1326 has biased composition (polar residues); the sequence is QSSPQPSPRTFSQE. A compositionally biased stretch (basic and acidic residues) spans 1340–1353; sequence QEQKQRSSSKDGHQ. Serine 1360 carries the phosphoserine modification.

Belongs to the CARMIL family. In terms of assembly, homodimer. Interacts (via C-terminus) with heterodimer capping protein (CP); this interaction uncaps barbed ends capped by CP, enhances barbed-end actin polymerization and promotes lamellipodial formation and cell migration. Interacts with heterodimer capping protein (CP). Interacts with MYO1E. Interacts with TRIO. In terms of tissue distribution, expressed in lung, placenta, small intestine, liver, thymus, colon, skeletal muscle, heart and brain. Higher expression in kidney.

The protein resides in the cytoplasm. The protein localises to the cytoskeleton. Its subcellular location is the cell membrane. It is found in the cell projection. It localises to the lamellipodium. Cell membrane-cytoskeleton-associated protein that plays a role in the regulation of actin polymerization at the barbed end of actin filaments. Prevents F-actin heterodimeric capping protein (CP) activity at the leading edges of migrating cells, and hence generates uncapped barbed ends and enhances actin polymerization, however, seems unable to nucleate filaments. Plays a role in lamellipodial protrusion formations and cell migration. The sequence is that of F-actin-uncapping protein LRRC16A from Homo sapiens (Human).